The sequence spans 201 residues: Lipopolysaccharide core heptose(II)-phosphate phosphatase (201 aa).

Positions 1 to 35 are cleaved as a signal peptide; sequence MLAFTLRFIKNKRYLATLAGALVIIAGLTSQHAWS.

Belongs to the phosphoglycerate mutase family. Ais subfamily.

The protein resides in the periplasm. It participates in bacterial outer membrane biogenesis; lipopolysaccharide metabolism. Catalyzes the dephosphorylation of heptose(II) of the outer membrane lipopolysaccharide core. This Salmonella choleraesuis (strain SC-B67) protein is Lipopolysaccharide core heptose(II)-phosphate phosphatase.